Consider the following 92-residue polypeptide: Small ribosomal subunit protein uS19 (92 aa).

It belongs to the universal ribosomal protein uS19 family.

Its function is as follows. Protein S19 forms a complex with S13 that binds strongly to the 16S ribosomal RNA. In Methylocella silvestris (strain DSM 15510 / CIP 108128 / LMG 27833 / NCIMB 13906 / BL2), this protein is Small ribosomal subunit protein uS19.